The following is a 92-amino-acid chain: Acylphosphatase (92 aa).

In terms of domain architecture, Acylphosphatase-like spans 6 to 92 (RMYVIVYGIV…TGEFASFDTY (87 aa)). Catalysis depends on residues Arg-21 and Asn-39.

Belongs to the acylphosphatase family.

The catalysed reaction is an acyl phosphate + H2O = a carboxylate + phosphate + H(+). This Sulfolobus acidocaldarius (strain ATCC 33909 / DSM 639 / JCM 8929 / NBRC 15157 / NCIMB 11770) protein is Acylphosphatase (acyP).